A 224-amino-acid polypeptide reads, in one-letter code: Large ribosomal subunit protein uL1 (224 aa).

It belongs to the universal ribosomal protein uL1 family. Part of the 50S ribosomal subunit.

Binds directly to 23S rRNA. The L1 stalk is quite mobile in the ribosome, and is involved in E site tRNA release. Functionally, protein L1 is also a translational repressor protein, it controls the translation of the L11 operon by binding to its mRNA. The sequence is that of Large ribosomal subunit protein uL1 from Borrelia hermsii (strain HS1 / DAH).